The sequence spans 129 residues: Small ribosomal subunit protein uS8c (129 aa).

Belongs to the universal ribosomal protein uS8 family. Part of the 30S ribosomal subunit.

The protein localises to the plastid. The protein resides in the chloroplast. In terms of biological role, one of the primary rRNA binding proteins, it binds directly to 16S rRNA central domain where it helps coordinate assembly of the platform of the 30S subunit. The chain is Small ribosomal subunit protein uS8c (rps8) from Nephroselmis olivacea (Green alga).